The following is a 347-amino-acid chain: Holliday junction branch migration complex subunit RuvB (347 aa).

The interval 4 to 186 is large ATPase domain (RuvB-L); sequence INEYGSERIV…FGMIFEMNFY (183 aa). ATP is bound by residues leucine 25, arginine 26, glycine 67, lysine 70, threonine 71, threonine 72, 133–135, arginine 176, tyrosine 186, and arginine 223; that span reads EDF. Threonine 71 provides a ligand contact to Mg(2+). The small ATPAse domain (RuvB-S) stretch occupies residues 187 to 257; sequence TQEELKMIIT…IVEEVMRLLG (71 aa). Residues 260–347 are head domain (RuvB-H); the sequence is EFGLDEMDRK…GLFDGFGNIE (88 aa). Residues arginine 315 and arginine 320 each coordinate DNA.

Belongs to the RuvB family. In terms of assembly, homohexamer. Forms an RuvA(8)-RuvB(12)-Holliday junction (HJ) complex. HJ DNA is sandwiched between 2 RuvA tetramers; dsDNA enters through RuvA and exits via RuvB. An RuvB hexamer assembles on each DNA strand where it exits the tetramer. Each RuvB hexamer is contacted by two RuvA subunits (via domain III) on 2 adjacent RuvB subunits; this complex drives branch migration. In the full resolvosome a probable DNA-RuvA(4)-RuvB(12)-RuvC(2) complex forms which resolves the HJ.

It localises to the cytoplasm. It catalyses the reaction ATP + H2O = ADP + phosphate + H(+). The RuvA-RuvB-RuvC complex processes Holliday junction (HJ) DNA during genetic recombination and DNA repair, while the RuvA-RuvB complex plays an important role in the rescue of blocked DNA replication forks via replication fork reversal (RFR). RuvA specifically binds to HJ cruciform DNA, conferring on it an open structure. The RuvB hexamer acts as an ATP-dependent pump, pulling dsDNA into and through the RuvAB complex. RuvB forms 2 homohexamers on either side of HJ DNA bound by 1 or 2 RuvA tetramers; 4 subunits per hexamer contact DNA at a time. Coordinated motions by a converter formed by DNA-disengaged RuvB subunits stimulates ATP hydrolysis and nucleotide exchange. Immobilization of the converter enables RuvB to convert the ATP-contained energy into a lever motion, pulling 2 nucleotides of DNA out of the RuvA tetramer per ATP hydrolyzed, thus driving DNA branch migration. The RuvB motors rotate together with the DNA substrate, which together with the progressing nucleotide cycle form the mechanistic basis for DNA recombination by continuous HJ branch migration. Branch migration allows RuvC to scan DNA until it finds its consensus sequence, where it cleaves and resolves cruciform DNA. The protein is Holliday junction branch migration complex subunit RuvB of Fervidobacterium nodosum (strain ATCC 35602 / DSM 5306 / Rt17-B1).